The primary structure comprises 1020 residues: LLGL scribble cell polarity complex component 2 (1020 aa).

14 WD repeats span residues 36 to 69 (SALGYSPSLRILAIGTRSGAIKLYGAPGVEFMGL), 76 to 117 (VTQI…DESF), 132 to 169 (ITVVLPHSSCELLYLGTESGNVFVVQLPAFRALEDRTI), 193 to 227 (ALQEHPRDPNQILIGYSRGLVVIWDLQGSRVLYHF), 233 to 268 (LENIWWQRDGRLLVSCHSDGSYCQWPVSSEAQQPEP), 282 to 324 (AITR…GQQT), 332 to 366 (VIGFTVLTEADPAATFDDPYALVVLAEEELVVIDL), 388 to 464 (TCSH…YKLS), 508 to 583 (QKIF…FVLV), 592 to 653 (TSLA…LRQS), 713 to 769 (VRTL…KEIQ), 778 to 830 (GILV…VSAK), 835 to 888 (LTAL…VRYS), and 902 to 925 (VFTKYGQGFYLISPSEFERFSLST). Residue Ser653 is modified to Phosphoserine. The span at 653-669 (SFRRMRRSRVSSRKRHP) shows a compositional bias: basic residues. Residues 653-689 (SFRRMRRSRVSSRKRHPAGPPGEAQEGSAKAERPGLQ) form a disordered region. Disordered stretches follow at residues 938 to 975 (AETKNHRPGNGAGPKKAPSRARNSGTQSDGEEKQPGLV) and 992 to 1020 (STLEGDRGSGNWRSHRAAVGCSLSNGGAE). Residues Ser965 and Ser1015 each carry the phosphoserine modification.

Belongs to the WD repeat L(2)GL family. Interacts with GPSM2/LGN, PRKCI/aPKC and PARD6B/Par-6. The complex is enhanced during mitosis. Interacts with DCAF1. Post-translationally, phosphorylated at Ser-653 by PRKCI. Phosphorylation is enhanced during cell polarization induced by calcium. Phosphorylation may occur during the cell-cell contact-induced cell polarization and may contribute to the segregation of LLGL2 from the PRKCI/aPKC and PARD6B/Par-6 complex.

The protein localises to the cytoplasm. Functionally, part of a complex with GPSM2/LGN, PRKCI/aPKC and PARD6B/Par-6, which may ensure the correct organization and orientation of bipolar spindles for normal cell division. This complex plays roles in the initial phase of the establishment of epithelial cell polarity. The chain is LLGL scribble cell polarity complex component 2 (LLGL2) from Homo sapiens (Human).